A 293-amino-acid chain; its full sequence is Ribosomal protein L11 methyltransferase (293 aa).

Residues Thr-145, Gly-166, Asp-188, and Asn-230 each contribute to the S-adenosyl-L-methionine site.

Belongs to the methyltransferase superfamily. PrmA family.

Its subcellular location is the cytoplasm. It catalyses the reaction L-lysyl-[protein] + 3 S-adenosyl-L-methionine = N(6),N(6),N(6)-trimethyl-L-lysyl-[protein] + 3 S-adenosyl-L-homocysteine + 3 H(+). In terms of biological role, methylates ribosomal protein L11. This chain is Ribosomal protein L11 methyltransferase, found in Serratia proteamaculans (strain 568).